Here is a 144-residue protein sequence, read N- to C-terminus: Deoxyuridine 5'-triphosphate nucleotidohydrolase (144 aa).

Residues 63-65, Asn-76, and 80-82 contribute to the substrate site; these read RSG and TID.

The protein belongs to the dUTPase family. Mg(2+) is required as a cofactor.

The enzyme catalyses dUTP + H2O = dUMP + diphosphate + H(+). The protein operates within pyrimidine metabolism; dUMP biosynthesis; dUMP from dCTP (dUTP route): step 2/2. Its function is as follows. This enzyme is involved in nucleotide metabolism: it produces dUMP, the immediate precursor of thymidine nucleotides and it decreases the intracellular concentration of dUTP so that uracil cannot be incorporated into DNA. The polypeptide is Deoxyuridine 5'-triphosphate nucleotidohydrolase (Porphyromonas gingivalis (strain ATCC BAA-308 / W83)).